The primary structure comprises 435 residues: F-box/FBD/LRR-repeat protein At5g44980 (435 aa).

The region spanning 3-49 is the F-box domain; it reads RDYISELPDSLLTQILLELRTKDSVKTSVLSKRWRNLWLNVPGLELF. LRR repeat units lie at residues 88–114, 138–162, 165–190, 191–217, 250–275, and 324–349; these read CKGYRDRLMELIGTLVDHGLQHLYVFM, LHNVELKNSDFVVSLPCLKILKLEN, HGEDGPLVVEKLISGCSVLEDLELIR, PFDIRTHKVLLLLRVSSQTLKSFTLHF, VKNLSSLFSIDIGTKFNPLRHEDLRM, and MWSSSTHLLEAFLESCPNLKNLILEY. One can recognise an FBD domain in the interval 355–405; it reads REQVDFTNVPQCLISTLEYVEIKEPNEKSTIKLVNYFLENSAVLKKLTLRF.

This chain is F-box/FBD/LRR-repeat protein At5g44980, found in Arabidopsis thaliana (Mouse-ear cress).